A 368-amino-acid polypeptide reads, in one-letter code: Probable magnesium transporter NIPA3 (368 aa).

Over 1-18 (MASLSGSWRDAYKGMSSD) the chain is Extracellular. A helical membrane pass occupies residues 19-39 (NIKGLVLALSSSLFIGASFIV). At 40-66 (KKKGLKRAGASGLRAGSGGYSYLLEPL) the chain is on the cytoplasmic side. The helical transmembrane segment at 67 to 87 (WWVGMITMIVGEIANFAAYAF) threads the bilayer. The Extracellular segment spans residues 88-90 (APA). Residues 91–111 (ILVTPLGALSIIISAALAHVI) form a helical membrane-spanning segment. Topologically, residues 112-115 (LHEK) are cytoplasmic. Residues 116–136 (LHTFGLLGCVLCVVGSITIVL) form a helical membrane-spanning segment. The Extracellular segment spans residues 137-157 (HAPQEQEIDSVLQVWNLATEP). The helical transmembrane segment at 158-178 (AFLLYAAAVVGAAIILIVQFV) threads the bilayer. Residues 179–189 (PQYGQSHVMVY) are Cytoplasmic-facing. The chain crosses the membrane as a helical span at residues 190-210 (IGVCSLVGSLSVMSVKALGIA). Over 211–220 (LKLTFSGMNQ) the chain is Extracellular. The helical transmembrane segment at 221–241 (LIYPQTWVFTLIVLTCVITQM) threads the bilayer. Topologically, residues 242 to 255 (NYLNKALDTFNTAV) are cytoplasmic. The helical transmembrane segment at 256–276 (VSPIYYVMFTSLTILASVIMF) threads the bilayer. Topologically, residues 277-283 (KDWDRQD) are extracellular. The chain crosses the membrane as a helical span at residues 284–304 (GTQIVTELCGFVTILSGTFLL). Over 305 to 368 (HKTKDMVDGS…ILPQDGPEAV (64 aa)) the chain is Cytoplasmic.

This sequence belongs to the NIPA (TC 2.A.7) family. As to quaternary structure, homodimer.

It localises to the cell membrane. The protein resides in the early endosome. In terms of biological role, acts as a Mg(2+) transporter. Can also transport other divalent cations such as Fe(2+), Sr(2+), Ba(2+), Mn(2+) and Co(2+) but to a much less extent than Mg(2+). The chain is Probable magnesium transporter NIPA3 from Arabidopsis thaliana (Mouse-ear cress).